Here is a 468-residue protein sequence, read N- to C-terminus: ATP synthase subunit beta (468 aa).

155–162 (GGAGVGKT) contributes to the ATP binding site.

The protein belongs to the ATPase alpha/beta chains family. In terms of assembly, F-type ATPases have 2 components, CF(1) - the catalytic core - and CF(0) - the membrane proton channel. CF(1) has five subunits: alpha(3), beta(3), gamma(1), delta(1), epsilon(1). CF(0) has three main subunits: a(1), b(2) and c(9-12). The alpha and beta chains form an alternating ring which encloses part of the gamma chain. CF(1) is attached to CF(0) by a central stalk formed by the gamma and epsilon chains, while a peripheral stalk is formed by the delta and b chains.

It is found in the cell membrane. It carries out the reaction ATP + H2O + 4 H(+)(in) = ADP + phosphate + 5 H(+)(out). Its function is as follows. Produces ATP from ADP in the presence of a proton gradient across the membrane. The catalytic sites are hosted primarily by the beta subunits. The protein is ATP synthase subunit beta of Bacillus cereus (strain G9842).